Consider the following 356-residue polypeptide: Phospho-N-acetylmuramoyl-pentapeptide-transferase (356 aa).

10 helical membrane passes run 25-45, 70-90, 93-113, 138-158, 164-184, 195-215, 232-252, 258-278, 284-304, and 333-353; these read TVAA…SIIS, GTPT…ALLW, LFNI…AIGF, FLVA…GLAL, YFIN…VGLG, GLAI…AYLS, VGEL…FLWF, AIFM…IVSV, IVLI…IIQV, and QIVV…LSTL.

It belongs to the glycosyltransferase 4 family. MraY subfamily. The cofactor is Mg(2+).

Its subcellular location is the cell inner membrane. The catalysed reaction is UDP-N-acetyl-alpha-D-muramoyl-L-alanyl-gamma-D-glutamyl-meso-2,6-diaminopimeloyl-D-alanyl-D-alanine + di-trans,octa-cis-undecaprenyl phosphate = di-trans,octa-cis-undecaprenyl diphospho-N-acetyl-alpha-D-muramoyl-L-alanyl-D-glutamyl-meso-2,6-diaminopimeloyl-D-alanyl-D-alanine + UMP. It functions in the pathway cell wall biogenesis; peptidoglycan biosynthesis. In terms of biological role, catalyzes the initial step of the lipid cycle reactions in the biosynthesis of the cell wall peptidoglycan: transfers peptidoglycan precursor phospho-MurNAc-pentapeptide from UDP-MurNAc-pentapeptide onto the lipid carrier undecaprenyl phosphate, yielding undecaprenyl-pyrophosphoryl-MurNAc-pentapeptide, known as lipid I. This Bartonella bacilliformis (strain ATCC 35685 / KC583 / Herrer 020/F12,63) protein is Phospho-N-acetylmuramoyl-pentapeptide-transferase.